The primary structure comprises 148 residues: Protein NrdI (148 aa).

Belongs to the NrdI family.

Probably involved in ribonucleotide reductase function. The chain is Protein NrdI from Mycolicibacterium gilvum (strain PYR-GCK) (Mycobacterium gilvum (strain PYR-GCK)).